A 294-amino-acid polypeptide reads, in one-letter code: MKNPCNVIAIIGKPRDQQAIQTHRELYEWLTSEGYQVFIDDRLAAILDEIPQSQFASLVELGKNADLAIVVGGDGNMLGAARILSRFDVAVIGVNRGNLGFLTDLNPDDFKEALKAVLKGKYIEEERFLLEAEIHRHGQIKSHNAALNEAVLHPGQVAHMIEFEVYIDDSFAFSLRADGLIVSTPTGSTAYSLSGGGPILSPSLNAISLVPMFPHTLSSRPLVVDGKRRIKLIVSPENRGTQEVSCDGQVSLPVSPGDEIHIYQSPNVLKLIHPKDYSYYHVLRNKLGWSSKLF.

The active-site Proton acceptor is the aspartate 74. Residues 74–75 (DG), 148–149 (NE), histidine 159, arginine 176, aspartate 178, 189–194 (TAYSLS), and glutamine 249 contribute to the NAD(+) site.

Belongs to the NAD kinase family. A divalent metal cation is required as a cofactor.

The protein resides in the cytoplasm. The catalysed reaction is NAD(+) + ATP = ADP + NADP(+) + H(+). Its function is as follows. Involved in the regulation of the intracellular balance of NAD and NADP, and is a key enzyme in the biosynthesis of NADP. Catalyzes specifically the phosphorylation on 2'-hydroxyl of the adenosine moiety of NAD to yield NADP. This chain is NAD kinase, found in Vibrio campbellii (strain ATCC BAA-1116).